A 498-amino-acid chain; its full sequence is DEAD-box ATP-dependent RNA helicase 6 (498 aa).

The disordered stretch occupies residues 1–109; sequence MDPRARYPPG…WKAQLKLPPQ (109 aa). The span at 33 to 49 shows a compositional bias: basic residues; that stretch reads QHQHQHQQPPHPHHHQY. Low complexity-rich tracts occupy residues 50–61 and 75–86; these read VQRQPQPQQTPH and AAEAAGASEQKA. The Q motif signature appears at 124–152; that stretch reads NEFEDYFLKRELLMGIYEKGFERPSPIQE. Positions 155–325 constitute a Helicase ATP-binding domain; sequence IPIALTGSDI…DKYLPKPYVI (171 aa). 168 to 175 contacts ATP; that stretch reads AKNGTGKT. Residues 273–276 carry the DEAD box motif; that stretch reads DEAD. Residues 335–495 form the Helicase C-terminal domain; that stretch reads GITQFYAFVE…PIPPQIDRAI (161 aa).

Belongs to the DEAD box helicase family. DDX6/DHH1 subfamily.

It is found in the cytoplasm. It localises to the P-body. The enzyme catalyses ATP + H2O = ADP + phosphate + H(+). ATP-dependent RNA helicase involved in mRNA turnover, and more specifically in mRNA decapping. This Oryza sativa subsp. japonica (Rice) protein is DEAD-box ATP-dependent RNA helicase 6.